Reading from the N-terminus, the 100-residue chain is Large ribosomal subunit protein bL21 (100 aa).

It belongs to the bacterial ribosomal protein bL21 family. In terms of assembly, part of the 50S ribosomal subunit. Contacts protein L20.

Its function is as follows. This protein binds to 23S rRNA in the presence of protein L20. The protein is Large ribosomal subunit protein bL21 of Corynebacterium kroppenstedtii (strain DSM 44385 / JCM 11950 / CIP 105744 / CCUG 35717).